The sequence spans 339 residues: Senescence-specific cysteine protease SAG39 (339 aa).

An N-terminal signal peptide occupies residues 1–23 (MAMAKALLFAILGCLCLCSAVLA). Cystine bridges form between cysteine 144/cysteine 187, cysteine 178/cysteine 220, and cysteine 276/cysteine 328. Residue cysteine 147 is part of the active site. Active-site residues include histidine 282 and asparagine 303.

It belongs to the peptidase C1 family.

The protein localises to the vacuole. Cysteine protease that may have a developmental senescence specific cell death function during apoptosis, heavy metal detoxification, and hypersensitive response. The chain is Senescence-specific cysteine protease SAG39 from Oryza sativa subsp. indica (Rice).